The primary structure comprises 1439 residues: METQVIDTVNEFLKVDSLDEAFVSVIVFKPNTEQERATRFANDLVTAFGNVAQENREQVLRLYLLRAAGASGYHIKVLMAALVKLVDAHVITARMLCDKVLMCEKLDFEHRTFWIESFRLIKRVIVQVDYKGVREIMKVCRDKAQWFPLNVNVTYMPQLLAVEDILRFIFDRNNCLLPAYFIANEIMRPFPYHWKLNRLMTDFVEEFRTTAQMVSIIGHASMLPIVEHFGYADHMMNSWRLDHNTLKFNFKGSLPYEPELLEEQKPLLRYVLEQPYSREMVSQMLNLQKHQKQRYNALEEQLVNLIVQAMEMTEANDATAGSGFNSSDEQITPYEWMWLHLSSQLIYFVLFQFVSFMHIVLALHEKLSKLELRKGRDQLMWILLQFISGSIQKNPITNFLPVFRLFDLLYPELEPLKLPDINKSSMVRHMAPICVWIHLMKKARVENMNITRPLPIALKNHYDFLQHLVTANTMMNMTLGNDFRIILICNAYSTNQEYFGRPMGLLLDALNGTSKSPNGGQIPAVTFSVTVLDSLTVHSKMSLIHSFVTQMLKQAQSKGQVPAAALLETYARLLVYTEIESLGIKGFLSQLMPTVFKNHAWAMLHTLMEMFSYRLHHVPTHYRVQLLSLLHSLSSVPQTNKMQLNLCFESTALRLITSIGSAEFQPQFSRYFNDKSPGAVASNESEELNRVLILTLARSMHVHGGGDEMQGWCKDFLSNIIQHTPHSWPMHSLACFPPALNEYFTQNNQPPENKQQLKKAVEEEYRTWTSMTNENDIIAHFLRPTTNPLFLCLLFKIIWETENISPVAYKILEGISARALSTHLRKFCDYLVAEVASSSDGRDFIHKCVDTINNMIWKFNVVTIDRVVLCLALRTHEGNEAQVCFLIIQLLLLKASELRNRVQEFCKDNNPDHWKQSNWQDKHLSFHQKYPEKFALDESASQIPLPVYFSNVCLRFLPVLDVVVHRFIELTITNVHQILGFILDHLSILYKFHDRPITYLYNTLHYYERILRDRPALKKKLVGAITSAFSEIRPPNWSVSEPYKVYLQSQDSLWTPELSYYMSLIRRLADTISGKNVFYSTDWRFNEFPNAPTHALYVTCVELLGLPVAPPLVASNLIDVIVSGYAVIPQKDIHSYINAVGIVLAALPEPYWSGIYDRLQDMLNTPNMLNWTYRFNAFELFNFKTVREAMLEKTYAVVLAVAHSVFHHMGAFKLAAMTRYLKEKLKPCVRTEQQLLYLCHVFGPFLQRIELEKPNAVAGIAVLLYEILEIVDKHHGPKPLQYMDQICDFLYHIKYIHVGNIIKNESEAIIKRLRPLLQMRLRFITHLNLEDIHTEKINDNTSNNAITSQTQSPMQTQHQQQPQQPHQQQQQQQQQQQQQQQQQQQQQQMQQQQINAVQTTSVPLGSGGNLQQQQQINQQQQMYMQHMQQHQHMQNMRHN.

A coiled-coil region spans residues 282 to 318 (SQMLNLQKHQKQRYNALEEQLVNLIVQAMEMTEANDA). The interval 358 to 625 (HIVLALHEKL…HHVPTHYRVQ (268 aa)) is interaction with Hsf. 2 disordered regions span residues 1338–1372 (NDNTSNNAITSQTQSPMQTQHQQQPQQPHQQQQQQ) and 1401–1439 (SVPLGSGGNLQQQQQINQQQQMYMQHMQQHQHMQNMRHN). Composition is skewed to low complexity over residues 1348 to 1372 (SQTQSPMQTQHQQQPQQPHQQQQQQ) and 1411 to 1439 (QQQQQINQQQQMYMQHMQQHQHMQNMRHN).

Belongs to the Mediator complex subunit 23 family. As to quaternary structure, component of the Mediator complex. Interacts with Hsf.

It localises to the nucleus. Component of the Mediator complex, a coactivator involved in the regulated transcription of nearly all RNA polymerase II-dependent genes. Mediator functions as a bridge to convey information from gene-specific regulatory proteins to the basal RNA polymerase II transcription machinery. Mediator is recruited to promoters by direct interactions with regulatory proteins and serves as a scaffold for the assembly of a functional preinitiation complex with RNA polymerase II and the general transcription factors. Required for transcriptional activation in response to heat shock. The chain is Mediator of RNA polymerase II transcription subunit 23 (MED23) from Drosophila melanogaster (Fruit fly).